A 416-amino-acid chain; its full sequence is Tryptophan synthase beta chain (416 aa).

Lys109 carries the N6-(pyridoxal phosphate)lysine modification.

It belongs to the TrpB family. As to quaternary structure, tetramer of two alpha and two beta chains. The cofactor is pyridoxal 5'-phosphate.

It carries out the reaction (1S,2R)-1-C-(indol-3-yl)glycerol 3-phosphate + L-serine = D-glyceraldehyde 3-phosphate + L-tryptophan + H2O. It functions in the pathway amino-acid biosynthesis; L-tryptophan biosynthesis; L-tryptophan from chorismate: step 5/5. In terms of biological role, the beta subunit is responsible for the synthesis of L-tryptophan from indole and L-serine. In Mesorhizobium japonicum (strain LMG 29417 / CECT 9101 / MAFF 303099) (Mesorhizobium loti (strain MAFF 303099)), this protein is Tryptophan synthase beta chain.